A 241-amino-acid polypeptide reads, in one-letter code: Adenosylcobinamide-GDP ribazoletransferase (241 aa).

Helical transmembrane passes span 34 to 54, 55 to 75, 109 to 129, 133 to 153, 165 to 185, 186 to 206, and 221 to 241; these read RIPA…FTGS, FLSL…GFYL, VGPF…ELIT, PVAF…VLVF, MLFP…LPLL, LIDV…GFLI, and VLGG…NYLI.

This sequence belongs to the CobS family. Mg(2+) is required as a cofactor.

The protein resides in the cell inner membrane. The catalysed reaction is alpha-ribazole + adenosylcob(III)inamide-GDP = adenosylcob(III)alamin + GMP + H(+). It catalyses the reaction alpha-ribazole 5'-phosphate + adenosylcob(III)inamide-GDP = adenosylcob(III)alamin 5'-phosphate + GMP + H(+). It participates in cofactor biosynthesis; adenosylcobalamin biosynthesis; adenosylcobalamin from cob(II)yrinate a,c-diamide: step 7/7. In terms of biological role, joins adenosylcobinamide-GDP and alpha-ribazole to generate adenosylcobalamin (Ado-cobalamin). Also synthesizes adenosylcobalamin 5'-phosphate from adenosylcobinamide-GDP and alpha-ribazole 5'-phosphate. In Fervidobacterium nodosum (strain ATCC 35602 / DSM 5306 / Rt17-B1), this protein is Adenosylcobinamide-GDP ribazoletransferase.